A 318-amino-acid polypeptide reads, in one-letter code: 1-phosphofructokinase (318 aa).

ATP contacts are provided by residues 228–233 (SMGTEG) and 259–260 (GD). Aspartate 260 serves as the catalytic Proton acceptor.

This sequence belongs to the carbohydrate kinase PfkB family.

The catalysed reaction is beta-D-fructose 1-phosphate + ATP = beta-D-fructose 1,6-bisphosphate + ADP + H(+). Catalyzes the ATP-dependent phosphorylation of fructose-l-phosphate to fructose-l,6-bisphosphate. The sequence is that of 1-phosphofructokinase from Xanthomonas campestris pv. campestris (strain ATCC 33913 / DSM 3586 / NCPPB 528 / LMG 568 / P 25).